The chain runs to 329 residues: MGATGDAEQPRGPSGAERGGLELGDAGAAGQLVLTNPWNIMIKHRQVQRRGRRSQMTTSFTDPAISMDLLRAVLQPSINEEIQTVFNKYMKFFQKAALNVRDNVGEEVDAEQLIQEACRSCLEQAKLLFSDGEKVIPRLTHELPGIKRGRQAEEECAHRGSPLPKKRKGRPPGHILSSDRAAAGMVWKPKSCEPIRREGPKWDPARLNESTTFVLGSRANKALGMGGTRGRIYIKHPHLFKYAADPQDKHWLAEQHHMRATGGKMAYLLIEEDIRDLAASDDYRGCLDLKLEELKSFVLPSWMVEKMRKYMETLRTENEHRAVEAPPQT.

Disordered stretches follow at residues 1 to 22 and 147 to 178; these read MGAT…GGLE and KRGR…ILSS. Residues 56-147 form an important for dimerization region; the sequence is MTTSFTDPAI…RLTHELPGIK (92 aa). Residues 147-158 show a composition bias toward basic and acidic residues; the sequence is KRGRQAEEECAH. Residues 159 to 173 constitute a DNA-binding region (a.T hook); it reads RGSPLPKKRKGRPPG. S161 carries the post-translational modification Phosphoserine. The Nuclear localization signal motif lies at 164–170; that stretch reads PKKRKGR. The important for DNA and nucleosome binding stretch occupies residues 197–316; that stretch reads REGPKWDPAR…MRKYMETLRT (120 aa). Residues 216-237 constitute a DNA-binding region (H-T-H motif); it reads GSRANKALGMGGTRGRIYIKHP.

As to quaternary structure, monomer and homodimer. A minor proportion may form homotrimers. Interacts with ZNF541. Interacts with the terminal deoxynucleotidyltransferase DNTT. Interacts with TRERF1. Identified in a histone deacetylase complex that contains DNTTIP1, HDAC1 and MIDEAS; this complex assembles into a tetramer that contains four copies of each protein chain. Component of a histone deacetylase complex containing DNTTIP1, ZNF541, HDAC1 and HDAC2. Identified in a complex with KCTD19, HDAC1, HDAC2 and ZNF541.

Its subcellular location is the nucleus. Increases DNTT terminal deoxynucleotidyltransferase activity (in vitro). Also acts as a transcriptional regulator, binding to the consensus sequence 5'-GNTGCATG-3' following an AT-tract. Associates with RAB20 promoter and positively regulates its transcription. Binds DNA and nucleosomes; may recruit HDAC1 complexes to nucleosomes or naked DNA. The protein is Deoxynucleotidyltransferase terminal-interacting protein 1 (DNTTIP1) of Homo sapiens (Human).